The following is a 341-amino-acid chain: THO complex subunit 6 homolog (341 aa).

WD repeat units follow at residues 22 to 61, 74 to 112, 124 to 165, 166 to 205, 215 to 254, 256 to 293, and 295 to 339; these read RLHM…SSEA, AHDG…GCKE, LEVP…RALR, GHTD…EVQT, SRPH…PTTV, PIRA…KAQV, and GSSP…AFSL. Ser180 is subject to Phosphoserine.

Belongs to the WD repeat THOC6 family. In terms of assembly, component of the THO subcomplex, which is composed of THOC1, THOC2, THOC3, THOC5, THOC6 and THOC7. The THO subcomplex interacts with DDX39B to form the THO-DDX39B complex which multimerizes into a 28-subunit tetrameric assembly. Component of the transcription/export (TREX) complex at least composed of ALYREF/THOC4, DDX39B, SARNP/CIP29, CHTOP and the THO subcomplex; in the complex interacts with THOC5; together with THOC5 and THOC7, plays a key structural role in the oligomerization of the THO-DDX39B complex. TREX seems to have a dynamic structure involving ATP-dependent remodeling.

The protein localises to the nucleus. It localises to the nucleus speckle. Functionally, component of the THO subcomplex of the TREX complex which is thought to couple mRNA transcription, processing and nuclear export, and which specifically associates with spliced mRNA and not with unspliced pre-mRNA. Plays a key structural role in the oligomerization of the THO-DDX39B complex. TREX is recruited to spliced mRNAs by a transcription-independent mechanism, binds to mRNA upstream of the exon-junction complex (EJC) and is recruited in a splicing- and cap-dependent manner to a region near the 5' end of the mRNA where it functions in mRNA export to the cytoplasm via the TAP/NXF1 pathway. Plays a role in apoptosis negative control involved in brain development. This Mus musculus (Mouse) protein is THO complex subunit 6 homolog (Thoc6).